The sequence spans 345 residues: Transcription initiation factor IIB (345 aa).

The TFIIB-type zinc finger occupies 8 to 40 (VGRNCPHCSAVDSLQTDDVMGEVACTACALVVA). Zn(2+)-binding residues include Cys-12, Cys-15, Cys-32, and Cys-35. Disordered regions lie at residues 59-89 (DVDHHRERNANPTAATSAAGSLSAADPHMSS) and 318-345 (PTAGKRKVDKNSEPEASGGTKRVKREET). Residues 71-83 (TAATSAAGSLSAA) are compositionally biased toward low complexity.

This sequence belongs to the TFIIB family. As to quaternary structure, monomer. Interacts with RNA polymerase II subunits RPB1 and RPB2. Interacts with TBP; the interaction is direct.

Its subcellular location is the nucleus. Functionally, specifically binds to the promoter of the spliced leader (SL) RNA gene and thus is essential for SLRNA transcription. The chain is Transcription initiation factor IIB from Trypanosoma brucei brucei.